The chain runs to 82 residues: Small ribosomal subunit protein bS16 (82 aa).

The protein belongs to the bacterial ribosomal protein bS16 family.

This chain is Small ribosomal subunit protein bS16, found in Blochmanniella floridana.